Here is a 509-residue protein sequence, read N- to C-terminus: Dihydrolipoyl dehydrogenase, mitochondrial (509 aa).

Residues 1–35 constitute a mitochondrion transit peptide; that stretch reads MQSWSRVYCTLAKRGHFNRIAHGLQGVSAVPLRTY. Position 66 is an N6-acetyllysine; alternate (lysine 66). Lysine 66 carries the N6-succinyllysine; alternate modification. FAD contacts are provided by residues 71–80 and lysine 89; that span reads EKNETLGGTC. Cysteine 80 and cysteine 85 form a disulfide bridge. 4 positions are modified to N6-acetyllysine; alternate: lysine 104, lysine 122, lysine 132, and lysine 143. Residues lysine 104, lysine 122, lysine 132, and lysine 143 each carry the N6-succinyllysine; alternate modification. Glycine 154 is an FAD binding site. 2 positions are modified to N6-succinyllysine: lysine 159 and lysine 166. Residue 183-185 participates in FAD binding; that stretch reads TGS. NAD(+)-binding positions include 220–227 and glutamate 243; that span reads GAGVIGVE. N6-succinyllysine occurs at positions 273 and 277. Valine 278 provides a ligand contact to NAD(+). Residues serine 285 and serine 297 each carry the phosphoserine modification. Position 314 (glycine 314) interacts with NAD(+). Position 346 is an N6-acetyllysine (lysine 346). Residues aspartate 355 and 361-364 contribute to the FAD site; that span reads MLAH. At lysine 410 the chain carries N6-acetyllysine; alternate. Lysine 410 bears the N6-succinyllysine; alternate mark. 2 positions are modified to N6-acetyllysine: lysine 417 and lysine 420. The residue at position 430 (lysine 430) is an N6-succinyllysine. Catalysis depends on histidine 487, which acts as the Proton acceptor. Serine 502 is modified (phosphoserine). Residue lysine 505 is modified to N6-acetyllysine; alternate. Position 505 is an N6-succinyllysine; alternate (lysine 505).

Belongs to the class-I pyridine nucleotide-disulfide oxidoreductase family. In terms of assembly, homodimer. Part of the multimeric pyruvate dehydrogenase complex that contains multiple copies of pyruvate dehydrogenase (subunits PDHA (PDHA1 or PDHA2) and PDHB, E1), dihydrolipoamide acetyltransferase (DLAT, E2) and lipoamide dehydrogenase (DLD, E3). These subunits are bound to an inner core composed of about 48 DLAT and 12 PDHX molecules (by non covalent bonds). The 2-oxoglutarate dehydrogenase complex is composed of OGDH (2-oxoglutarate dehydrogenase; E1), DLST (dihydrolipoamide succinyltransferase; E2), DLD (dihydrolipoamide dehydrogenase; E3) and the assembly factor KGD4. It contains multiple copies of the three enzymatic components (E1, E2 and E3). In the nucleus, the 2-oxoglutarate dehydrogenase complex associates with KAT2A. Interacts with PDHX. The cofactor is FAD. Post-translationally, tyrosine phosphorylated. Expressed in heart (at protein level).

It localises to the mitochondrion matrix. Its subcellular location is the nucleus. It is found in the cell projection. The protein localises to the cilium. The protein resides in the flagellum. It localises to the cytoplasmic vesicle. Its subcellular location is the secretory vesicle. It is found in the acrosome. It carries out the reaction N(6)-[(R)-dihydrolipoyl]-L-lysyl-[protein] + NAD(+) = N(6)-[(R)-lipoyl]-L-lysyl-[protein] + NADH + H(+). Lipoamide dehydrogenase is a component of the glycine cleavage system as well as an E3 component of three alpha-ketoacid dehydrogenase complexes (pyruvate-, alpha-ketoglutarate-, and branched-chain amino acid-dehydrogenase complex). The 2-oxoglutarate dehydrogenase complex is mainly active in the mitochondrion. A fraction of the 2-oxoglutarate dehydrogenase complex also localizes in the nucleus and is required for lysine succinylation of histones: associates with KAT2A on chromatin and provides succinyl-CoA to histone succinyltransferase KAT2A. In monomeric form may have additional moonlighting function as serine protease. Involved in the hyperactivation of spermatazoa during capacitation and in the spermatazoal acrosome reaction. This chain is Dihydrolipoyl dehydrogenase, mitochondrial (DLD), found in Sus scrofa (Pig).